Reading from the N-terminus, the 254-residue chain is Alcohol dehydrogenase (254 aa).

10 to 33 (FVAGLGGIGLDTSREIVKSGPKNL) serves as a coordination point for NAD(+). Ser138 is a substrate binding site. Tyr151 serves as the catalytic Proton acceptor.

Belongs to the short-chain dehydrogenases/reductases (SDR) family. As to quaternary structure, homodimer.

It carries out the reaction a primary alcohol + NAD(+) = an aldehyde + NADH + H(+). The catalysed reaction is a secondary alcohol + NAD(+) = a ketone + NADH + H(+). In Drosophila planitibia (Fruit fly), this protein is Alcohol dehydrogenase (Adh).